Reading from the N-terminus, the 1347-residue chain is Spermatogenesis-associated protein 31A5 (1347 aa).

Residues 23-43 (PWVLDIFLTLVFALGFFFLLL) form a helical membrane-spanning segment. Disordered stretches follow at residues 55 to 87 (PSPS…GREC), 106 to 233 (GPHL…RDST), 373 to 397 (EQDT…GPQK), 628 to 657 (DESP…KEAQ), 900 to 955 (RGIP…REAV), 1084 to 1161 (VHEE…PSVS), and 1313 to 1335 (KAVS…SHHH). The segment covering 60–82 (GKRKCPVGRRRRPRGRMKNHSLR) has biased composition (basic residues). The segment covering 165-178 (LASTPSPGPMTTSV) has biased composition (polar residues). Positions 198–211 (PEPPALFPHPPHTP) are enriched in pro residues. 2 stretches are compositionally biased toward polar residues: residues 631–651 (PGTS…STGE) and 927–948 (LTYS…SSKA). 2 stretches are compositionally biased toward basic and acidic residues: residues 1108-1127 (HKSE…RLEG) and 1137-1146 (RKTEDTHQDE).

It belongs to the SPATA31 family.

It localises to the membrane. Its function is as follows. May play a role in spermatogenesis. This Homo sapiens (Human) protein is Spermatogenesis-associated protein 31A5 (SPATA31A5).